Reading from the N-terminus, the 78-residue chain is Small ribosomal subunit protein bS16c (78 aa).

The protein belongs to the bacterial ribosomal protein bS16 family.

It is found in the plastid. It localises to the chloroplast. In Panax ginseng (Korean ginseng), this protein is Small ribosomal subunit protein bS16c.